The primary structure comprises 84 residues: Large ribosomal subunit protein bL27 (84 aa).

Positions 1-22 (MAHKKAGGSTRNGRDSESKRLG) are disordered.

The protein belongs to the bacterial ribosomal protein bL27 family.

The chain is Large ribosomal subunit protein bL27 from Shewanella denitrificans (strain OS217 / ATCC BAA-1090 / DSM 15013).